A 428-amino-acid polypeptide reads, in one-letter code: Endoplasmic reticulum junction formation protein lunapark (428 aa).

G2 is lipidated: N-myristoyl glycine. The Cytoplasmic portion of the chain corresponds to 2–45 (GGLFSRWRTKLSTVEVLESIDKEIQALEEFREKNQRLQKLRVGR). The stretch at 16-43 (EVLESIDKEIQALEEFREKNQRLQKLRV) forms a coiled coil. A helical transmembrane segment spans residues 46 to 66 (LILYSSVLYLFTCLIVYLWYL). The Lumenal segment spans residues 67–77 (PDEFTARLAMT). The helical transmembrane segment at 78-98 (LPFFAFPLIIWSIRTVIIFFF) threads the bilayer. Over 99–428 (SKRTERNNEA…ELNGESLTAE (330 aa)) the chain is Cytoplasmic. The stretch at 102 to 128 (TERNNEALDDLKSQRKKILEEVMEKET) forms a coiled coil. Phosphoserine is present on residues S114, S153, S177, S182, and S194. Residues 143–248 (SKKAKECEPP…PPGPPLARPI (106 aa)) are disordered. The span at 185 to 198 (QGPPPQVPVSPGPP) shows a compositional bias: pro residues. Residues T211 and T213 each carry the phosphothreonine modification. Phosphoserine is present on residues S217 and S227. Residues 276-301 (CQQCFSHNGMALKEEFEYIAFRCAYC) form a C4-type; plays a role in ER morphology zinc finger. Phosphoserine occurs at positions 321, 353, and 384. The interval 361–428 (NNTEQTDDKI…ELNGESLTAE (68 aa)) is disordered. Over residues 386–401 (SEEPEEKQETENEEAS) the composition is skewed to acidic residues. The residue at position 414 (S414) is a Phosphoserine.

It belongs to the lunapark family. As to quaternary structure, homodimer; homodimerization requires the C4-type zinc finger motif and decreases during mitosis in a phosphorylation-dependent manner. In terms of processing, myristoylated; myristoylation is necessary for the endoplasmic reticulum (ER) three-way ER tubular junction formation, but is not required neither for membrane translocation, membrane topology formation, nor for the specific localization to ER membranes. Post-translationally, phosphorylated. Phosphorylation occurs at Ser-177, Ser-182, Ser-217, Ser-227, Ser-321 and Ser-384 during interphase. Phosphorylation occurs at Ser-114, Ser-153, Ser-194, Thr-211 and Ser-353 during mitosis; these phosphorylations reduce both its homodimerization and the ER three-way tubular junction formation. Subject to proteasomal degradation following phosphorylation during mitosis.

It localises to the endoplasmic reticulum membrane. In terms of biological role, endoplasmic reticulum (ER)-shaping membrane protein that plays a role in determining ER morphology. Involved in the stabilization of nascent three-way ER tubular junctions within the ER network. May also play a role as a curvature-stabilizing protein within three-way ER tubular junction network. May be involved in limb and central nervous system development. This chain is Endoplasmic reticulum junction formation protein lunapark, found in Pongo abelii (Sumatran orangutan).